The following is a 970-amino-acid chain: UvrABC system protein A (970 aa).

Residue 34-41 participates in ATP binding; it reads GVSGSGKS. Residues 284–311 form a C4-type zinc finger; that stretch reads CPEHGAVMDELSPRLFSFNSPYGACPDC. ABC transporter domains follow at residues 340–617 and 637–965; these read WSEK…QRSL and GNGA…KYLA. 669–676 is a binding site for ATP; sequence GVSGSGKS. The segment at 768–794 adopts a C4-type zinc-finger fold; sequence CEACAGQGVNVIEMNFLPDVYVQCDVC.

Belongs to the ABC transporter superfamily. UvrA family. As to quaternary structure, forms a heterotetramer with UvrB during the search for lesions.

The protein localises to the cytoplasm. In terms of biological role, the UvrABC repair system catalyzes the recognition and processing of DNA lesions. UvrA is an ATPase and a DNA-binding protein. A damage recognition complex composed of 2 UvrA and 2 UvrB subunits scans DNA for abnormalities. When the presence of a lesion has been verified by UvrB, the UvrA molecules dissociate. This Synechocystis sp. (strain ATCC 27184 / PCC 6803 / Kazusa) protein is UvrABC system protein A.